The primary structure comprises 339 residues: DNA-directed RNA polymerase subunit alpha (339 aa).

Residues 1 to 233 form an alpha N-terminal domain (alpha-NTD) region; that stretch reads MVREEVAGST…DLFLPFLHAE (233 aa). Residues 266–339 are alpha C-terminal domain (alpha-CTD); the sequence is GIPLNCIFID…IDLLKNKLSF (74 aa).

The protein belongs to the RNA polymerase alpha chain family. In terms of assembly, in plastids the minimal PEP RNA polymerase catalytic core is composed of four subunits: alpha, beta, beta', and beta''. When a (nuclear-encoded) sigma factor is associated with the core the holoenzyme is formed, which can initiate transcription.

It localises to the plastid. It is found in the chloroplast. The catalysed reaction is RNA(n) + a ribonucleoside 5'-triphosphate = RNA(n+1) + diphosphate. In terms of biological role, DNA-dependent RNA polymerase catalyzes the transcription of DNA into RNA using the four ribonucleoside triphosphates as substrates. This chain is DNA-directed RNA polymerase subunit alpha, found in Elymus canadensis (Canada wild rye).